Consider the following 1067-residue polypeptide: MPLNKDIKKVLVIGSGPIIIGQAAEFDYSGTQACQALKEEGIEVVLVNSNPATIMTDKEIADKVYLEPLTVEFVEKVIEKERPDSLLAGMGGQTGLNLAVELYEKGILDKYNVKVIGTSIESIKEGEDRELFRDMMNRINQPVIQSEIITDLDAGIAFARKIGYPVIVRPAYTLGGTGGGIANNEEELIETLTSGLQLSTIGQVLLEKSVKGWKEIEYEVMRDSFGNCITVCNMENIDPVGIHTGDSIVVAPSQTLSDKEYQMLRSASIDIINAVGIEGGCNVQFALNPHSFEYAVIEINPRVSRSSALASKATGYPIAKVAAKIALGYGLDEIKNAVTGMTYACFEPSLDYVVVKIPKWPFDKFQGADRVLGTKMMATGEIMAIGSNFEAAFLKGIRSLEIGKYSLEHKKFKDLSMYELRERVVSPDDERIFALAEMLRRGYRIDMVSKITGIDIFFLEKFRWLVEEEQKLKQSTIDDLNREWLLKLKRRGFSDKAIADMLKVSPDEIYRLRDIWHIKPSYKMVDTCGGEFEALSPYYYSTYEQYDEVVVSDNKKVVVIGSGPIRIGQGIEFDYASVHCVMALRKQGIETIVINNNPETVSTDFSISDKLYFEPLTEEDVLNIIDKEKPDGVILQFGGQTAIKLAKFLKEKNIPTLGTTSDQIDLAEDREQFDDLLERLNIARPKGKGVWSLEEGLEEARRLGFPILVRPSFVLGGQGMEITHDEEELTYYLTNAFEKDSKNPILIDKYLMGREIEVDAISDGEDVLVPGIMEHLERAGVHSGDSITMYPAQNISDKIKEDVLDYTKKLALSIGIKGMINIQFIEFEGKLYVIEVNPRASRTVPYISKVSGVPIVDIATRIMLGEKLKDLGYGTGVYKEPELVSVKVPVFSTQKLPNVEVSLGPEMRSTGEVLGVGRNVFEALYKGFVGASMYTGDKGKTILATIKKHDKKEFMELAKDLDKLGYNFIATTGTAKELREAGIDAKEVRRIGEESPNIMDLIKNKEIDLVVNTPTKANDSKRDGFHIRRAAIERNIGVMTSLDTLKALVELQKEGAHNRELEVFNLI.

The tract at residues 1-401 (MPLNKDIKKV…AFLKGIRSLE (401 aa)) is carboxyphosphate synthetic domain. Arg129, Arg169, Gly175, Gly176, Lys208, Val210, Glu215, Gly241, Ile242, His243, Gln284, and Glu298 together coordinate ATP. Positions 133–327 (RDMMNRINQP…IAKVAAKIAL (195 aa)) constitute an ATP-grasp 1 domain. Positions 284, 298, and 300 each coordinate Mg(2+). Mn(2+) is bound by residues Gln284, Glu298, and Asn300. An oligomerization domain region spans residues 402–549 (IGKYSLEHKK…YSTYEQYDEV (148 aa)). The interval 550–932 (VVSDNKKVVV…ALYKGFVGAS (383 aa)) is carbamoyl phosphate synthetic domain. Residues 674–864 (DDLLERLNIA…IVDIATRIML (191 aa)) enclose the ATP-grasp 2 domain. 10 residues coordinate ATP: Arg710, Lys749, Leu751, Glu755, Gly780, Val781, His782, Ser783, Gln823, and Glu835. Residues Gln823, Glu835, and Asn837 each contribute to the Mg(2+) site. Residues Gln823, Glu835, and Asn837 each contribute to the Mn(2+) site. The region spanning 933–1067 (MYTGDKGKTI…NRELEVFNLI (135 aa)) is the MGS-like domain. Positions 933-1067 (MYTGDKGKTI…NRELEVFNLI (135 aa)) are allosteric domain.

Belongs to the CarB family. Composed of two chains; the small (or glutamine) chain promotes the hydrolysis of glutamine to ammonia, which is used by the large (or ammonia) chain to synthesize carbamoyl phosphate. Tetramer of heterodimers (alpha,beta)4. It depends on Mg(2+) as a cofactor. Requires Mn(2+) as cofactor.

The catalysed reaction is hydrogencarbonate + L-glutamine + 2 ATP + H2O = carbamoyl phosphate + L-glutamate + 2 ADP + phosphate + 2 H(+). The enzyme catalyses hydrogencarbonate + NH4(+) + 2 ATP = carbamoyl phosphate + 2 ADP + phosphate + 2 H(+). The protein operates within amino-acid biosynthesis; L-arginine biosynthesis; carbamoyl phosphate from bicarbonate: step 1/1. It functions in the pathway pyrimidine metabolism; UMP biosynthesis via de novo pathway; (S)-dihydroorotate from bicarbonate: step 1/3. Large subunit of the glutamine-dependent carbamoyl phosphate synthetase (CPSase). CPSase catalyzes the formation of carbamoyl phosphate from the ammonia moiety of glutamine, carbonate, and phosphate donated by ATP, constituting the first step of 2 biosynthetic pathways, one leading to arginine and/or urea and the other to pyrimidine nucleotides. The large subunit (synthetase) binds the substrates ammonia (free or transferred from glutamine from the small subunit), hydrogencarbonate and ATP and carries out an ATP-coupled ligase reaction, activating hydrogencarbonate by forming carboxy phosphate which reacts with ammonia to form carbamoyl phosphate. The chain is Carbamoyl phosphate synthase large chain from Clostridium perfringens (strain 13 / Type A).